Here is an 840-residue protein sequence, read N- to C-terminus: Phosphatidylglycerol lysyltransferase (840 aa).

Over 1–8 (MNQEVKNK) the chain is Cytoplasmic. A helical membrane pass occupies residues 9 to 29 (IFSILKITFATALFIFVVITL). Residues 30–52 (YRELSGINFKDTLVEFSKINRMS) lie on the Extracellular side of the membrane. The helical transmembrane segment at 53–73 (LVLLFIGGGASLVILSMYDVI) threads the bilayer. Topologically, residues 74 to 89 (LSRALKMDISLGKVLR) are cytoplasmic. A helical membrane pass occupies residues 90 to 110 (VSYIINALNAIVGFGGFIGAG). The Extracellular segment spans residues 111–128 (VRAMVYKNYTHDKKKLVH). Residues 129–149 (FISLILISMLTGLSLLSLLIV) traverse the membrane as a helical segment. Residues 150–161 (FHVFDASLILDK) lie on the Cytoplasmic side of the membrane. The chain crosses the membrane as a helical span at residues 162-182 (ITWVRWVLYVVSFFLPLFIIY). Residues 183–200 (SMVRPPDKNNRFVGLYCT) lie on the Extracellular side of the membrane. Residues 201–221 (LVSCVEWLAAAVVLYFCGVIV) form a helical membrane-spanning segment. Over 222-229 (DAHVSFMS) the chain is Cytoplasmic. A helical membrane pass occupies residues 230-250 (FIAIFIIAALSGLVSFIPGGF). The Extracellular portion of the chain corresponds to 251 to 271 (GAFDLVVLLGFKTLGVPEEKV). Residues 272–292 (LLMLLLYRFAYYFVPVIIALI) form a helical membrane-spanning segment. Residues 293–337 (LSSFEFGTSAKKYIEGSKYFIPAKDVTSFLMSYQKDIIAKIPSLS) lie on the Cytoplasmic side of the membrane. The helical transmembrane segment at 338-358 (LAILVFFTSMIFFVNNLTIVY) threads the bilayer. At 359–369 (DALYDGNHLTY) the chain is on the extracellular side. The chain crosses the membrane as a helical span at residues 370–390 (YILLAIHTSACLLLLLNVVGI). Topologically, residues 391 to 394 (YKQS) are cytoplasmic. Helical transmembrane passes span 395–415 (RRAI…TFFT) and 416–436 (YASY…IVAF). Residues 437–450 (RRARRLKRPVRMRN) lie on the Cytoplasmic side of the membrane. A helical membrane pass occupies residues 451 to 471 (IVAMLLFSLFILYVNHIFIAG). Topologically, residues 472–489 (TLYALDIYTIEMHTSVLR) are extracellular. A helical transmembrane segment spans residues 490 to 510 (YYFWLTILIIAIIIGMIAWLF). Residues 511-840 (DYQFSKVRIS…SKVMRVIRHK (330 aa)) are Cytoplasmic-facing.

The protein belongs to the LPG synthase family.

The protein resides in the cell membrane. The catalysed reaction is L-lysyl-tRNA(Lys) + a 1,2-diacyl-sn-glycero-3-phospho-(1'-sn-glycerol) = a 1,2-diacyl-sn-glycero-3-phospho-1'-(3'-O-L-lysyl)-sn-glycerol + tRNA(Lys). Its function is as follows. Catalyzes the transfer of a lysyl group from L-lysyl-tRNA(Lys) to membrane-bound phosphatidylglycerol (PG), which produces lysylphosphatidylglycerol (LPG), a major component of the bacterial membrane with a positive net charge. LPG synthesis contributes to bacterial virulence as it is involved in the resistance mechanism against cationic antimicrobial peptides (CAMP) produces by the host's immune system (defensins, cathelicidins) and by the competing microorganisms (bacteriocins). In fact, the modification of anionic phosphatidylglycerol with positively charged L-lysine results in repulsion of the peptides. This is Phosphatidylglycerol lysyltransferase (mprF) from Staphylococcus aureus (strain MSSA476).